The sequence spans 210 residues: Ribonuclease HII (210 aa).

The RNase H type-2 domain maps to 18-210 (GLIAGVDEVG…FKPVKALLGL (193 aa)). Positions 24, 25, and 116 each coordinate a divalent metal cation.

It belongs to the RNase HII family. Mn(2+) serves as cofactor. Requires Mg(2+) as cofactor.

It localises to the cytoplasm. It catalyses the reaction Endonucleolytic cleavage to 5'-phosphomonoester.. In terms of biological role, endonuclease that specifically degrades the RNA of RNA-DNA hybrids. The sequence is that of Ribonuclease HII from Shewanella baltica (strain OS155 / ATCC BAA-1091).